A 485-amino-acid chain; its full sequence is Ribosomal protein uS12 methylthiotransferase RimO (485 aa).

An MTTase N-terminal domain is found at 37–147 (SRIGFVSLGC…VVEQVHEHLP (111 aa)). [4Fe-4S] cluster-binding residues include Cys-46, Cys-82, Cys-111, Cys-179, Cys-183, and Cys-186. Residues 165–402 (LTPRHYAYLK…MEVQGEISAA (238 aa)) form the Radical SAM core domain. The TRAM domain occupies 405 to 471 (KARIGNEYQV…EHDVWAVLSE (67 aa)).

It belongs to the methylthiotransferase family. RimO subfamily. [4Fe-4S] cluster serves as cofactor.

It is found in the cytoplasm. The enzyme catalyses L-aspartate(89)-[ribosomal protein uS12]-hydrogen + (sulfur carrier)-SH + AH2 + 2 S-adenosyl-L-methionine = 3-methylsulfanyl-L-aspartate(89)-[ribosomal protein uS12]-hydrogen + (sulfur carrier)-H + 5'-deoxyadenosine + L-methionine + A + S-adenosyl-L-homocysteine + 2 H(+). Functionally, catalyzes the methylthiolation of an aspartic acid residue of ribosomal protein uS12. This chain is Ribosomal protein uS12 methylthiotransferase RimO, found in Alteromonas mediterranea (strain DSM 17117 / CIP 110805 / LMG 28347 / Deep ecotype).